The primary structure comprises 34 residues: Phalloidin proprotein (34 aa).

Positions Met-1–Pro-10 are excised as a propeptide. The segment at residues Ala-11 to Pro-17 is a cross-link (cyclopeptide (Ala-Pro)). The segment at residues Trp-12–Cys-16 is a cross-link (2'-cysteinyl-6'-hydroxytryptophan sulfoxide (Trp-Cys)). Residues Cys-18–Cys-34 constitute a propeptide that is removed on maturation.

It belongs to the MSDIN fungal toxin family. In terms of processing, processed by the macrocyclase-peptidase enzyme POPB to yield a toxic cyclic heptapeptide. POPB first removes 10 residues from the N-terminus. Conformational trapping of the remaining peptide forces the enzyme to release this intermediate rather than proceed to macrocyclization. The enzyme rebinds the remaining peptide in a different conformation and catalyzes macrocyclization of the N-terminal 7 residues.

In terms of biological role, toxin that belongs to the bicyclic heptapeptides called phallotoxins. Although structurally related to amatoxins, phallotoxins have a different mode of action, which is the stabilization of F-actin. Phallotoxins are poisonous when administered parenterally, but not orally because of poor absorption. In Amanita phalloides (Death cap), this protein is Phalloidin proprotein.